A 241-amino-acid chain; its full sequence is MTVLIIGMGNIGKKLVELGNFEKIYAYDRISKDIPGVVRLDEFQVPSDVSTVVECASPEAVKEYSLQILKNPVNYIIISTSAFADEVFRERFFSELKNSPARVFFPSGAIGGLDVLSSIKDFVKNVRIETIKPPKSLGLDLKGKTVVFEGSVEEASKLFPRNINVASTIGLIVGFEKVKVTIVADPAMDHNIHIVRISSAIGNYEFKIENIPSPENPKTSMLTVYSILRTLRNLESKIIFG.

NAD(+) contacts are provided by residues 10–11, Asp-28, 56–57, 63–64, 78–79, Ala-109, and Asn-164; these read NI, AS, EY, and IS. The active site involves His-193.

It belongs to the L-aspartate dehydrogenase family. Homodimer.

It catalyses the reaction L-aspartate + NADP(+) + H2O = oxaloacetate + NH4(+) + NADPH + H(+). It carries out the reaction L-aspartate + NAD(+) + H2O = oxaloacetate + NH4(+) + NADH + H(+). The protein operates within cofactor biosynthesis; NAD(+) biosynthesis; iminoaspartate from L-aspartate (dehydrogenase route): step 1/1. With respect to regulation, competitively inhibited by L-malate and NH(4)(+). Functionally, specifically catalyzes the NAD or NADP-dependent dehydrogenation of L-aspartate to iminoaspartate. Does not show aspartate oxidase activity. Is also able to catalyze the reverse reaction, i.e. the reductive amination of oxaloacetate. The polypeptide is L-aspartate dehydrogenase (Thermotoga maritima (strain ATCC 43589 / DSM 3109 / JCM 10099 / NBRC 100826 / MSB8)).